The chain runs to 169 residues: Methanogen homoaconitase small subunit (169 aa).

The YLRT motif lies at tyrosine 27–threonine 30.

Belongs to the LeuD family. LeuD type 2 subfamily. Heterotetramer of 2 HacA and 2 HacB proteins.

It carries out the reaction (2R)-homocitrate = (2R,3S)-homoisocitrate. The enzyme catalyses (2R)-homocitrate = cis-homoaconitate + H2O. The catalysed reaction is (2R,3S)-homoisocitrate = cis-homoaconitate + H2O. It catalyses the reaction cis-(homo)2aconitate + H2O = (2R,3S)-iso(homo)2citrate. It carries out the reaction cis-(homo)3aconitate + H2O = (2R,3S)-iso(homo)3citrate. Its pathway is organic acid metabolism; 2-oxosuberate biosynthesis. Its function is as follows. Component of a hydro-lyase with broad substrate specificity for cis-unsaturated tricarboxylic acids. Catalyzes both the reversible dehydration of (R)-homocitrate ((R)-2-hydroxybutane-1,2,4-tricarboxylate) to produce cis-homoaconitate ((Z)-but-1-ene-1,2,4-tricarboxylate), and its hydration to homoisocitrate ((1R,2S)-1-hydroxybutane-1,2,4-tricarboxylate). Is also able to hydrate the analogous longer chain substrates cis-homo(2)-aconitate, cis-homo(3)-aconitate. These reactions are part of the biosynthesis pathway of coenzyme B. This chain is Methanogen homoaconitase small subunit (hacB), found in Methanosarcina mazei (strain ATCC BAA-159 / DSM 3647 / Goe1 / Go1 / JCM 11833 / OCM 88) (Methanosarcina frisia).